The primary structure comprises 177 residues: Large ribosomal subunit protein uL6 (177 aa).

Belongs to the universal ribosomal protein uL6 family. As to quaternary structure, part of the 50S ribosomal subunit.

In terms of biological role, this protein binds to the 23S rRNA, and is important in its secondary structure. It is located near the subunit interface in the base of the L7/L12 stalk, and near the tRNA binding site of the peptidyltransferase center. The sequence is that of Large ribosomal subunit protein uL6 from Laribacter hongkongensis (strain HLHK9).